The chain runs to 397 residues: uncharacterized protein (397 aa).

A run of 11 helical transmembrane segments spans residues 9 to 29, 38 to 58, 85 to 105, 112 to 132, 148 to 168, 182 to 202, 226 to 246, 271 to 291, 310 to 330, 331 to 351, and 365 to 385; these read NAVL…GFLT, LLAS…GAQL, FLAA…VGGA, IFGI…ILIF, MGFI…PPVV, PIAI…FAGA, AILI…GVVS, VLFG…AAYT, WIIA…KPAA, VLVF…ALIL, and HPVF…ILSG.

It belongs to the NRAMP family.

The protein localises to the cell membrane. This is an uncharacterized protein from Haemophilus influenzae (strain ATCC 51907 / DSM 11121 / KW20 / Rd).